The chain runs to 405 residues: Mucosal addressin cell adhesion molecule 1 (405 aa).

The N-terminal stretch at 1–21 (MESILALLLALALVPYQLSRG) is a signal peptide. Ig-like domains are found at residues 22 to 109 (QSFQ…ILVY) and 110 to 227 (AFPD…TSPK). Over 22-364 (QSFQVNPPES…PGQVTPNSSS (343 aa)) the chain is Extracellular. 3 cysteine pairs are disulfide-bonded: Cys45-Cys91, Cys49-Cys95, and Cys132-Cys200. The interval 221–257 (QSQTSPKPPNTTSAEPYILTSSSTAEAVSTGLNITTL) is mucin-like. 2 N-linked (GlcNAc...) asparagine glycosylation sites follow: Asn230 and Asn253. Residues 255–275 (TTLPSAPPYPKLSPRTLSSEG) form a disordered region. The region spanning 258-357 (PSAPPYPKLS…EVTNLYVPGQ (100 aa)) is the Ig-like 3 domain. Cys293 and Cys341 are oxidised to a cystine. N-linked (GlcNAc...) asparagine glycosylation occurs at Asn361. The chain crosses the membrane as a helical span at residues 365-385 (TVVLWIGSLVLGLLALVFLAY). The Cytoplasmic segment spans residues 386-405 (RLWKCYRPGPRPDTSSCTHL).

Homodimer. Post-translationally, O-glycosylated; contains syalic acid. The Ser/Thr-rich mucin-like domain may provide possible sites for O-glycosylation. Highly expressed on high endothelial venules (HEV) of organized intestinal lymphoid tissues like the Peyer patches and mesenteric lymph nodes, and in the lamina propria of the intestine. Some expression found in the spleen, and low levels of expression in the peripheral lymph nodes and the lactating mammary gland. No expression was detected in the liver, kidneys, lungs or in normal brain. Expressed as well in brain endothelioma cells, and mucosal tissues which are in a chronic state of inflammation, such as inflamed pancreas.

The protein resides in the membrane. Functionally, cell adhesion leukocyte receptor expressed by mucosal venules, helps to direct lymphocyte traffic into mucosal tissues including the Peyer patches and the intestinal lamina propria. It can bind both the integrin alpha-4/beta-7 and L-selectin, regulating both the passage and retention of leukocytes. Both isoform 1 and isoform 2 can adhere to integrin alpha-4/beta-7. Isoform 2, lacking the mucin-like domain, may be specialized in supporting integrin alpha-4/beta-7-dependent adhesion strengthening, independent of L-selectin binding. The protein is Mucosal addressin cell adhesion molecule 1 (Madcam1) of Mus musculus (Mouse).